The primary structure comprises 330 residues: Cathepsin S (330 aa).

The signal sequence occupies residues M1–A17. Residues E18–T112 constitute a propeptide, activation peptide. N-linked (GlcNAc...) asparagine glycans are attached at residues N100 and N110. Disulfide bonds link C124/C222, C134/C179, C168/C211, and C271/C319. Residue C137 is part of the active site. Active-site residues include H277 and N297.

The protein belongs to the peptidase C1 family. In terms of assembly, monomer. As to expression, highest levels occur in the ileum followed by spleen, brain, thyroid, ovary and uterus. Low levels are found in the liver, kidney, jejunum and lung with lowest levels in the heart.

It is found in the lysosome. The protein resides in the secreted. The protein localises to the cytoplasmic vesicle. Its subcellular location is the phagosome. The catalysed reaction is Similar to cathepsin L, but with much less activity on Z-Phe-Arg-|-NHMec, and more activity on the Z-Val-Val-Arg-|-Xaa compound.. Its function is as follows. Thiol protease. Key protease responsible for the removal of the invariant chain from MHC class II molecules and MHC class II antigen presentation. The bond-specificity of this proteinase is in part similar to the specificities of cathepsin L. The protein is Cathepsin S (Ctss) of Rattus norvegicus (Rat).